Here is a 103-residue protein sequence, read N- to C-terminus: Large ribosomal subunit protein bL21 (103 aa).

Belongs to the bacterial ribosomal protein bL21 family. Part of the 50S ribosomal subunit. Contacts protein L20.

Its function is as follows. This protein binds to 23S rRNA in the presence of protein L20. This is Large ribosomal subunit protein bL21 from Histophilus somni (strain 129Pt) (Haemophilus somnus).